We begin with the raw amino-acid sequence, 317 residues long: Ribosomal protein L11 methyltransferase (317 aa).

Positions 158, 179, 201, and 244 each coordinate S-adenosyl-L-methionine.

The protein belongs to the methyltransferase superfamily. PrmA family.

The protein localises to the cytoplasm. The enzyme catalyses L-lysyl-[protein] + 3 S-adenosyl-L-methionine = N(6),N(6),N(6)-trimethyl-L-lysyl-[protein] + 3 S-adenosyl-L-homocysteine + 3 H(+). Functionally, methylates ribosomal protein L11. This chain is Ribosomal protein L11 methyltransferase, found in Streptococcus agalactiae serotype III (strain NEM316).